We begin with the raw amino-acid sequence, 1342 residues long: DNA-directed RNA polymerase subunit beta (1342 aa).

Belongs to the RNA polymerase beta chain family. As to quaternary structure, the RNAP catalytic core consists of 2 alpha, 1 beta, 1 beta' and 1 omega subunit. When a sigma factor is associated with the core the holoenzyme is formed, which can initiate transcription.

The enzyme catalyses RNA(n) + a ribonucleoside 5'-triphosphate = RNA(n+1) + diphosphate. Its function is as follows. DNA-dependent RNA polymerase catalyzes the transcription of DNA into RNA using the four ribonucleoside triphosphates as substrates. This Actinobacillus pleuropneumoniae serotype 5b (strain L20) protein is DNA-directed RNA polymerase subunit beta.